The primary structure comprises 126 residues: Iron-sulfur cluster insertion protein ErpA (126 aa).

The disordered stretch occupies residues 1 to 21 (MNQPANQFNPSSSQPVDPTVL). Iron-sulfur cluster is bound by residues Cys-54, Cys-118, and Cys-120.

This sequence belongs to the HesB/IscA family. Homodimer. Iron-sulfur cluster is required as a cofactor.

Functionally, required for insertion of 4Fe-4S clusters for at least IspG. The protein is Iron-sulfur cluster insertion protein ErpA of Psychrobacter arcticus (strain DSM 17307 / VKM B-2377 / 273-4).